We begin with the raw amino-acid sequence, 499 residues long: Tektin-like protein 1 (499 aa).

Coiled-coil stretches lie at residues 197 to 227 (SMLTWEKEELKSMKRKMERDMEKSEVLLKTL) and 297 to 317 (LNEAKRLLVESKDTLVEMAKN). The residue at position 372 (Tyr-372) is a Phosphotyrosine.

In terms of assembly, microtubule inner protein component of sperm flagellar doublet microtubules.

It localises to the cytoplasm. The protein localises to the cytoskeleton. It is found in the flagellum axoneme. In terms of biological role, microtubule inner protein (MIP) part of the dynein-decorated doublet microtubules (DMTs) in sperm flagellar axoneme, which is required for motile flagellum beating. Forms an extensive interaction network cross-linking the lumen of axonemal doublet microtubules. In Homo sapiens (Human), this protein is Tektin-like protein 1.